Here is a 331-residue protein sequence, read N- to C-terminus: 6-phosphogluconolactonase (331 aa).

Lys-287 is subject to N6-acetyllysine.

This sequence belongs to the cycloisomerase 2 family.

It carries out the reaction 6-phospho-D-glucono-1,5-lactone + H2O = 6-phospho-D-gluconate + H(+). It functions in the pathway carbohydrate degradation; pentose phosphate pathway; D-ribulose 5-phosphate from D-glucose 6-phosphate (oxidative stage): step 2/3. Functionally, catalyzes the hydrolysis of 6-phosphogluconolactone to 6-phosphogluconate. The polypeptide is 6-phosphogluconolactonase (Escherichia fergusonii (strain ATCC 35469 / DSM 13698 / CCUG 18766 / IAM 14443 / JCM 21226 / LMG 7866 / NBRC 102419 / NCTC 12128 / CDC 0568-73)).